Here is an 85-residue protein sequence, read N- to C-terminus: Large ribosomal subunit protein bL27 (85 aa).

Residues M1–G22 form a disordered region.

The protein belongs to the bacterial ribosomal protein bL27 family.

This Pseudoalteromonas translucida (strain TAC 125) protein is Large ribosomal subunit protein bL27.